Here is a 193-residue protein sequence, read N- to C-terminus: Penicillin-binding protein activator LpoB (193 aa).

Residues Met-1–Gly-16 form the signal peptide. A lipid anchor (N-palmitoyl cysteine) is attached at Cys-17. Cys-17 is lipidated: S-diacylglycerol cysteine. The segment at Gln-23–Val-50 is disordered. The span at Pro-37–Pro-46 shows a compositional bias: pro residues.

This sequence belongs to the LpoB family. Interacts with PBP1b.

It localises to the cell outer membrane. Functionally, regulator of peptidoglycan synthesis that is essential for the function of penicillin-binding protein 1B (PBP1b). In Proteus mirabilis (strain HI4320), this protein is Penicillin-binding protein activator LpoB.